Consider the following 346-residue polypeptide: High mobility group protein 20A (346 aa).

2 stretches are compositionally biased toward polar residues: residues 1–10 (MESLMASSTL) and 55–65 (SQGQLLQSEAS). 2 disordered regions span residues 1-112 (MESL…YVRF) and 178-210 (FSRK…TEVK). The segment covering 71–81 (NEQRPEDEQRS) has biased composition (basic and acidic residues). The segment covering 82–95 (KRGGWSKGRKRKKP) has biased composition (basic residues). A DNA-binding region (HMG box) is located at residues 102 to 170 (PKSPLTGYVR…RYMKELEQYQ (69 aa)). Ser104 is modified (phosphoserine). Basic and acidic residues predominate over residues 181-210 (KTQDRQKGKSHRQDAARQATHDHEKETEVK). A coiled-coil region spans residues 228–272 (SKAREAELRQLRKSNMEFEERNAALQKHVESMRTAVEKLEVDVIQ).

In terms of assembly, interacts with DTNB. Expressed in brain. Detected in mature neurons.

It is found in the nucleus. Its function is as follows. Plays a role in neuronal differentiation as chromatin-associated protein. Acts as inhibitor of HMG20B. Overcomes the repressive effects of the neuronal silencer REST and induces the activation of neuronal-specific genes. Involved in the recruitment of the histone methyltransferase KMT2A/MLL1 and consequent increased methylation of histone H3 lysine 4. The protein is High mobility group protein 20A (Hmg20a) of Mus musculus (Mouse).